The sequence spans 444 residues: Probable glycine dehydrogenase (decarboxylating) subunit 1 (444 aa).

This sequence belongs to the GcvP family. N-terminal subunit subfamily. The glycine cleavage system is composed of four proteins: P, T, L and H. In this organism, the P 'protein' is a heterodimer of two subunits.

The enzyme catalyses N(6)-[(R)-lipoyl]-L-lysyl-[glycine-cleavage complex H protein] + glycine + H(+) = N(6)-[(R)-S(8)-aminomethyldihydrolipoyl]-L-lysyl-[glycine-cleavage complex H protein] + CO2. In terms of biological role, the glycine cleavage system catalyzes the degradation of glycine. The P protein binds the alpha-amino group of glycine through its pyridoxal phosphate cofactor; CO(2) is released and the remaining methylamine moiety is then transferred to the lipoamide cofactor of the H protein. In Chlorobaculum parvum (strain DSM 263 / NCIMB 8327) (Chlorobium vibrioforme subsp. thiosulfatophilum), this protein is Probable glycine dehydrogenase (decarboxylating) subunit 1.